Here is a 531-residue protein sequence, read N- to C-terminus: MSALLSADDLNDFISPGIACIKPTVTENRSQEASEYGEVEIQIDENGKPLEISKIDGATKNLSPAQISLADCLACSGCITSAEEILVAQHSHNELIKALKEKKTNNKIFVASISHQARASLATAYYMKVSDIDRLLVDLLVNQMGFTYVVGTGLGRKLSLINESQSVIERKEHGFQGPILSSICPGWVLYAEKTHPHVLSRISDTKSPQQITGCLLKSLTAHQLEVERDQIYHLSIMPCFDKKLESARPEQDPSLVSNDVDCVLTPKELVTLLDECKDKFSLTFDALSHSSGSLTDLYQSCAPANWPYVELSWSSDSGSSSGGYGYNYLQLLQSHLCLRDPQQYQPQNFRLESVAGRNKDIYELRLVYNDNQVASSAIVNGFRNIQNLVRKLKPTSSTTTTKTNPLVARRKARLSSKRSESGAQDVQQADASKCDYVEIMACPNGCINGGGQINSPTDEDQKLWVSKTLTRYGSIPMVDLSSDSSLTLELMAWCREFCINYNVPESRLLKTWFHEVEQPTDQAAILVGSKW.

Residues cysteine 20, cysteine 72, cysteine 75, cysteine 78, cysteine 184, and cysteine 239 each contribute to the [4Fe-4S] cluster site. Residues threonine 395–valine 426 are disordered. Positions 442 and 446 each coordinate [4Fe-4S] cluster.

This sequence belongs to the NARF family.

Its function is as follows. Component of the cytosolic Fe/S protein assembly machinery. Required for maturation of extramitochondrial Fe/S proteins. May play a role in the transfer of pre-assembled Fe/S clusters to target apoproteins. The polypeptide is Cytosolic Fe-S cluster assembly factor NAR1 (NAR1) (Meyerozyma guilliermondii (strain ATCC 6260 / CBS 566 / DSM 6381 / JCM 1539 / NBRC 10279 / NRRL Y-324) (Yeast)).